We begin with the raw amino-acid sequence, 790 residues long: Cadherin-6 (790 aa).

The N-terminal stretch at 1–30 (MRTYHCFWLLFWAGQPHQSFLTLLSKRTSG) is a signal peptide. A propeptide spanning residues 31 to 53 (FPEKEKVLVLSGNSRRDLSRSKR) is cleaved from the precursor. 5 consecutive Cadherin domains span residues 54 to 159 (SWMW…EPMF), 160 to 268 (TKDV…PPRF), 269 to 383 (PQST…PPVF), 384 to 486 (SRPA…DNAP), and 487 to 608 (EFAM…LIHP). Residues 54-615 (SWMWNQFFLL…IHPTGLSTGA (562 aa)) are Extracellular-facing. N165 and N255 each carry an N-linked (GlcNAc...) asparagine glycan. Residues 261–289 (VNDNPPRFPQSTYQFRAPESTPPDSPIGR) form a disordered region. N437, N455, and N536 each carry an N-linked (GlcNAc...) asparagine glycan. A helical membrane pass occupies residues 616-636 (LIAILLCIIILLVTVVLFAAL). Residues 637–790 (RRQRKKEPLI…YGSMDSDKDS (154 aa)) are Cytoplasmic-facing.

Its subcellular location is the cell membrane. In terms of biological role, cadherins are calcium-dependent cell adhesion proteins. They preferentially interact with themselves in a homophilic manner in connecting cells; cadherins may thus contribute to the sorting of heterogeneous cell types. The chain is Cadherin-6 (CDH6) from Gallus gallus (Chicken).